The chain runs to 522 residues: F-box/LRR-repeat protein 16 (522 aa).

The F-box domain maps to tyrosine 38 to leucine 84. LRR repeat units follow at residues serine 115–glycine 140, cysteine 141–serine 166, phenylalanine 169–arginine 191, arginine 266–lysine 290, threonine 291–glycine 316, valine 319–glycine 344, threonine 348–glycine 369, serine 370–isoleucine 393, glycine 395–lysine 420, and cysteine 421–glutamate 447.

The chain is F-box/LRR-repeat protein 16 (FBL16) from Arabidopsis thaliana (Mouse-ear cress).